A 458-amino-acid chain; its full sequence is PH domain-containing protein DDB_G0274775 (458 aa).

A PH domain is found at 15 to 112; that stretch reads PSDREGWLTK…WMESIKRNLD (98 aa). The segment at 111–154 is disordered; sequence LDGEGGMKSGGNDIVSSPKINSEPTPKVNQNGSAPEKSSLSSPR. The segment covering 124–142 has biased composition (polar residues); sequence IVSSPKINSEPTPKVNQNG. Residues 143–154 show a composition bias toward low complexity; sequence SAPEKSSLSSPR.

This is PH domain-containing protein DDB_G0274775 from Dictyostelium discoideum (Social amoeba).